Here is a 308-residue protein sequence, read N- to C-terminus: Ribosomal RNA small subunit methyltransferase H (308 aa).

Residues Gly-32–His-34, Asp-52, Phe-78, Asp-100, and Gln-107 each bind S-adenosyl-L-methionine.

This sequence belongs to the methyltransferase superfamily. RsmH family.

Its subcellular location is the cytoplasm. The enzyme catalyses cytidine(1402) in 16S rRNA + S-adenosyl-L-methionine = N(4)-methylcytidine(1402) in 16S rRNA + S-adenosyl-L-homocysteine + H(+). Specifically methylates the N4 position of cytidine in position 1402 (C1402) of 16S rRNA. This chain is Ribosomal RNA small subunit methyltransferase H, found in Legionella pneumophila (strain Paris).